We begin with the raw amino-acid sequence, 466 residues long: Tyrosinase HcTyr1 (466 aa).

Residues His43, His78, His87, His211, His215, and His238 each coordinate Cu cation.

Belongs to the tyrosinase family. Monomer. Formation of a dimer is observed when the protein is in its holo-form. Requires Cu(2+) as cofactor. Post-translationally, in vitro, the C-terminal lid-domain is slowly cleaved off in an autoprocessive time dependent manner, leading to the formation of cleaved-HcTyr1. The processing rate is not influenced by factors such as pH and added metal ions.

The catalysed reaction is L-tyrosine + O2 = L-dopaquinone + H2O. It catalyses the reaction 2 L-tyrosine + O2 = 2 L-dopa. The enzyme catalyses 2 L-dopa + O2 = 2 L-dopaquinone + 2 H2O. Its activity is regulated as follows. Cleavage of the lid-domain increases activity levels, affinity for substrate and turnover rate. Exhibits high saline tolerance. In terms of biological role, copper-containing oxidase that catalyzes the conversion of L-tyrosine to L-dopa and then to L-dopaquinone. Can use various phenols such as p-coumaric acid, phenol, pyrocatechol, syringol or pyrogallol. Accepts several of the constituents of lignin and potentially participates in lignin functionalization. This chain is Tyrosinase HcTyr1, found in Hahella sp. (strain CCB-MM4).